The primary structure comprises 237 residues: Ribosomal RNA small subunit methyltransferase G (237 aa).

S-adenosyl-L-methionine-binding positions include G78, F83, 129–130, and R148; that span reads AE. The segment at 218-237 is disordered; sequence KKETPNKYPRKAGMPNKRPL.

It belongs to the methyltransferase superfamily. RNA methyltransferase RsmG family.

The protein localises to the cytoplasm. Functionally, specifically methylates the N7 position of a guanine in 16S rRNA. The sequence is that of Ribosomal RNA small subunit methyltransferase G from Streptococcus pneumoniae serotype 19F (strain G54).